We begin with the raw amino-acid sequence, 218 residues long: Probable GTP-binding protein EngB (218 aa).

Positions 44 to 218 constitute an EngB-type G domain; the sequence is DRIEVCFAGR…LRATIATIET (175 aa). GTP is bound by residues 52–59, 79–83, 97–100, 164–167, and 198–200; these read GRSNVGKS, GRTQE, DLPG, TKSD, and TSS. Positions 59 and 81 each coordinate Mg(2+).

It belongs to the TRAFAC class TrmE-Era-EngA-EngB-Septin-like GTPase superfamily. EngB GTPase family. The cofactor is Mg(2+).

In terms of biological role, necessary for normal cell division and for the maintenance of normal septation. The protein is Probable GTP-binding protein EngB of Jannaschia sp. (strain CCS1).